The chain runs to 430 residues: Pre-B-cell leukemia transcription factor 2 (430 aa).

The segment at 1–52 (MDERLLGPPPPGGGRGGLGLVSGEPGGPGEPPGGGDPGGGSGGVPGGRGKQD) is disordered. Positions 13-48 (GGRGGLGLVSGEPGGPGEPPGGGDPGGGSGGVPGGR) are enriched in gly residues. Residues 48 to 243 (RGKQDIGDIL…VMILRSRFLD (196 aa)) enclose the PBC domain. The tract at residues 55-134 (DILQQIMTIT…EGVAGPEKGG (80 aa)) is PBC-A. Ser-136, Ser-151, and Ser-159 each carry phosphoserine. The segment at 137 to 243 (AAAAAAAAAS…VMILRSRFLD (107 aa)) is PBC-B. The homeobox; TALE-type DNA-binding region spans 244 to 306 (ARRKRRNFSK…NKRIRYKKNI (63 aa)). 2 disordered regions span residues 326 to 347 (QGGH…GGSF) and 378 to 430 (SMGP…DTSN). Phosphoserine is present on Ser-330. Residues 380 to 392 (GPGGYGDNLGGGQ) show a composition bias toward gly residues. Phosphoserine is present on Ser-395. The span at 403 to 418 (GSWQEAVTPSSVTSPT) shows a compositional bias: polar residues.

Belongs to the TALE/PBX homeobox family. Forms heterodimers with MEIS1 and heterotrimers with MEIS1 and HOXA9. Interacts with PBXIP1. As to expression, ubiquitously expressed.

The protein resides in the nucleus. Functionally, transcriptional activator that binds the sequence 5'-ATCAATCAA-3'. Activates transcription of PF4 in complex with MEIS1. The chain is Pre-B-cell leukemia transcription factor 2 (PBX2) from Homo sapiens (Human).